A 257-amino-acid chain; its full sequence is MANSTLRRTTFFKLTTTEDEDTIPKLLQPNNNSVAFPNLKRTGKAFTNDTIKENTKKYTRPRNQFVLMRTLFNRRVNNHILQYYNKSKLEKKMFTLTSKITSELWNESSPDLKSYFSLLATLEENWHKYTHYCSWDRNSAQTLSMEPIELSQVRPRLISSLTVGAGSSVSTYTLRELLLVRKIKSRKRKTTTLTQDSSPTTKFKYKFKKQPKTKMNSNLSKLRFKSKQPPTPPEENSNVFKKRYTSENRIIEDLFLM.

The segment at residues tyrosine 58–tyrosine 132 is a DNA-binding region (HMG box). The tract at residues glutamine 210–valine 239 is disordered.

It belongs to the MATA2 family.

The protein localises to the nucleus. Mating type proteins are sequence specific DNA-binding proteins that act as master switches in yeast differentiation by controlling gene expression in a cell type-specific fashion. Transcriptional activator that induces the transcription of a-specific genes. The sequence is that of Mating-type protein A2 (MATA2) from Kluyveromyces lactis (strain ATCC 8585 / CBS 2359 / DSM 70799 / NBRC 1267 / NRRL Y-1140 / WM37) (Yeast).